The following is a 517-amino-acid chain: Glutamyl-tRNA(Gln) amidotransferase subunit A, mitochondrial (517 aa).

Residues Lys58 and Ser131 each act as charge relay system in the active site. The disordered stretch occupies residues 106-132; it reads FGMGTHSTHSAHGPVASPAGRSAGGSS. The Acyl-ester intermediate role is filled by Ser155.

This sequence belongs to the amidase family. GatA subfamily. Subunit of the heterotrimeric GatCAB amidotransferase (AdT) complex, composed of A, B and C subunits.

The protein resides in the mitochondrion. It catalyses the reaction L-glutamyl-tRNA(Gln) + L-glutamine + ATP + H2O = L-glutaminyl-tRNA(Gln) + L-glutamate + ADP + phosphate + H(+). Allows the formation of correctly charged Gln-tRNA(Gln) through the transamidation of misacylated Glu-tRNA(Gln) in the mitochondria. The reaction takes place in the presence of glutamine and ATP through an activated gamma-phospho-Glu-tRNA(Gln). The protein is Glutamyl-tRNA(Gln) amidotransferase subunit A, mitochondrial of Pyricularia oryzae (strain 70-15 / ATCC MYA-4617 / FGSC 8958) (Rice blast fungus).